Here is a 77-residue protein sequence, read N- to C-terminus: uncharacterized protein (77 aa).

Disordered regions lie at residues 1–34 (MSRA…TKMN) and 56–77 (LDGD…FSGR). The segment covering 8-20 (DNDKGWAKKKGAD) has biased composition (basic and acidic residues). Positions 25–34 (PRPHKQTKMN) are enriched in basic residues. A compositionally biased stretch (basic and acidic residues) spans 56 to 70 (LDGDIRRGGNKKSER).

This is an uncharacterized protein from Dictyostelium discoideum (Social amoeba).